A 369-amino-acid chain; its full sequence is Porphobilinogen deaminase, chloroplastic (369 aa).

Residues 1 to 46 (MEMTLYSSSSFSLPSAPSNPSLSLFTSSFRFSSFKTSPFSKCRIRA) constitute a chloroplast transit peptide. Residue Cys303 is modified to S-(dipyrrolylmethanemethyl)cysteine.

It belongs to the HMBS family. Dipyrromethane serves as cofactor.

It localises to the plastid. Its subcellular location is the chloroplast. The enzyme catalyses 4 porphobilinogen + H2O = hydroxymethylbilane + 4 NH4(+). It functions in the pathway porphyrin-containing compound metabolism; protoporphyrin-IX biosynthesis; coproporphyrinogen-III from 5-aminolevulinate: step 2/4. The protein operates within porphyrin-containing compound metabolism; chlorophyll biosynthesis. Functionally, tetrapolymerization of the monopyrrole PBG into the hydroxymethylbilane pre-uroporphyrinogen in several discrete steps. In Pisum sativum (Garden pea), this protein is Porphobilinogen deaminase, chloroplastic (HEMC).